The primary structure comprises 657 residues: Macrolide export ATP-binding/permease protein MacB (657 aa).

In terms of domain architecture, ABC transporter spans 5 to 242 (LELLDVHRTY…RAVTGESAFD (238 aa)). Residue 41-48 (GASGSGKS) coordinates ATP. Helical transmembrane passes span 276–296 (FLSVLGIFVGVASVIAMMALG), 538–558 (IAAISLLVGGIGIMNIMLVSV), 596–616 (IGVFAGVGISLILAFFAGWAV), and 620–640 (LLSVVLATTFSALIGVFFGLW).

It belongs to the ABC transporter superfamily. Macrolide exporter (TC 3.A.1.122) family. As to quaternary structure, homodimer.

It localises to the cell inner membrane. In terms of biological role, non-canonical ABC transporter that contains transmembrane domains (TMD), which form a pore in the inner membrane, and an ATP-binding domain (NBD), which is responsible for energy generation. Confers resistance against macrolides. This is Macrolide export ATP-binding/permease protein MacB from Chlorobium phaeobacteroides (strain DSM 266 / SMG 266 / 2430).